We begin with the raw amino-acid sequence, 604 residues long: Aspartate--tRNA(Asp/Asn) ligase (604 aa).

Position 175 (Glu175) interacts with L-aspartate. The aspartate stretch occupies residues Gln199–Lys202. Arg221 and His456 together coordinate L-aspartate. Arg221–Glu223 contacts ATP. Glu496 lines the ATP pocket. Position 503 (Arg503) interacts with L-aspartate. Gly548 to Arg551 contacts ATP.

Belongs to the class-II aminoacyl-tRNA synthetase family. Type 1 subfamily. Homodimer.

It is found in the cytoplasm. It carries out the reaction tRNA(Asx) + L-aspartate + ATP = L-aspartyl-tRNA(Asx) + AMP + diphosphate. Functionally, aspartyl-tRNA synthetase with relaxed tRNA specificity since it is able to aspartylate not only its cognate tRNA(Asp) but also tRNA(Asn). Reaction proceeds in two steps: L-aspartate is first activated by ATP to form Asp-AMP and then transferred to the acceptor end of tRNA(Asp/Asn). This Methylobacterium nodulans (strain LMG 21967 / CNCM I-2342 / ORS 2060) protein is Aspartate--tRNA(Asp/Asn) ligase.